An 852-amino-acid polypeptide reads, in one-letter code: Alanine--tRNA ligase (852 aa).

Zn(2+)-binding residues include His554, His558, Cys656, and His660.

The protein belongs to the class-II aminoacyl-tRNA synthetase family. The cofactor is Zn(2+).

The protein localises to the cytoplasm. The enzyme catalyses tRNA(Ala) + L-alanine + ATP = L-alanyl-tRNA(Ala) + AMP + diphosphate. Functionally, catalyzes the attachment of alanine to tRNA(Ala) in a two-step reaction: alanine is first activated by ATP to form Ala-AMP and then transferred to the acceptor end of tRNA(Ala). Also edits incorrectly charged Ser-tRNA(Ala) and Gly-tRNA(Ala) via its editing domain. This Campylobacter concisus (strain 13826) protein is Alanine--tRNA ligase.